The sequence spans 118 residues: Thioredoxin H-type 2 (118 aa).

A Thioredoxin domain is found at 2-113 (AEEGQVIGVH…LQQTIAKHIS (112 aa)). Active-site nucleophile residues include cysteine 39 and cysteine 42. Cysteine 39 and cysteine 42 form a disulfide bridge.

This sequence belongs to the thioredoxin family. Plant H-type subfamily.

It is found in the cytoplasm. In terms of biological role, participates in various redox reactions through the reversible oxidation of the active center dithiol to a disulfide. The H form is known to activate a number of cytosolic enzymes. In Nicotiana tabacum (Common tobacco), this protein is Thioredoxin H-type 2.